Consider the following 325-residue polypeptide: Cytochrome c1, heme protein, mitochondrial (325 aa).

The N-terminal 84 residues, 1-84 (MAAAAASLRG…AMALHSAVSA (84 aa)), are a transit peptide targeting the mitochondrion. Over 85-281 (SDLELHPPSY…TFLRWASEPE (197 aa)) the chain is Mitochondrial intermembrane. The Cytochrome c domain maps to 108–209 (TSIRRGFQVY…IVRARHGGED (102 aa)). Residues C121, C124, and H125 each contribute to the heme c site. Position 182 is a phosphoserine (S182). M244 lines the heme c pocket. The helical transmembrane segment at 282–315 (HDHRKRMGLKMLMMMALLVPLVYTIKRHKWSVLK) threads the bilayer. Over 316–325 (SRKLAYRPPK) the chain is Mitochondrial matrix.

The protein belongs to the cytochrome c family. As to quaternary structure, component of the ubiquinol-cytochrome c oxidoreductase (cytochrome b-c1 complex, complex III, CIII), a multisubunit enzyme composed of 11 subunits. The complex is composed of 3 respiratory subunits cytochrome b, cytochrome c1 and Rieske protein UQCRFS1, 2 core protein subunits UQCRC1/QCR1 and UQCRC2/QCR2, and 6 low-molecular weight protein subunits UQCRH/QCR6, UQCRB/QCR7, UQCRQ/QCR8, UQCR10/QCR9, UQCR11/QCR10 and subunit 9, the cleavage product of Rieske protein UQCRFS1. The complex exists as an obligatory dimer and forms supercomplexes (SCs) in the inner mitochondrial membrane with NADH-ubiquinone oxidoreductase (complex I, CI) and cytochrome c oxidase (complex IV, CIV), resulting in different assemblies (supercomplex SCI(1)III(2)IV(1) and megacomplex MCI(2)III(2)IV(2)). Interacts with FLVCR2; this interaction occurs in the absence of heme and is disrupted upon heme binding. Requires heme c as cofactor.

It is found in the mitochondrion inner membrane. The enzyme catalyses a quinol + 2 Fe(III)-[cytochrome c](out) = a quinone + 2 Fe(II)-[cytochrome c](out) + 2 H(+)(out). Its function is as follows. Component of the ubiquinol-cytochrome c oxidoreductase, a multisubunit transmembrane complex that is part of the mitochondrial electron transport chain which drives oxidative phosphorylation. The respiratory chain contains 3 multisubunit complexes succinate dehydrogenase (complex II, CII), ubiquinol-cytochrome c oxidoreductase (cytochrome b-c1 complex, complex III, CIII) and cytochrome c oxidase (complex IV, CIV), that cooperate to transfer electrons derived from NADH and succinate to molecular oxygen, creating an electrochemical gradient over the inner membrane that drives transmembrane transport and the ATP synthase. The cytochrome b-c1 complex catalyzes electron transfer from ubiquinol to cytochrome c, linking this redox reaction to translocation of protons across the mitochondrial inner membrane, with protons being carried across the membrane as hydrogens on the quinol. In the process called Q cycle, 2 protons are consumed from the matrix, 4 protons are released into the intermembrane space and 2 electrons are passed to cytochrome c. Cytochrome c1 is a catalytic core subunit containing a c-type heme. It transfers electrons from the [2Fe-2S] iron-sulfur cluster of the Rieske protein to cytochrome c. This Homo sapiens (Human) protein is Cytochrome c1, heme protein, mitochondrial (CYC1).